We begin with the raw amino-acid sequence, 317 residues long: Melanocyte-stimulating hormone receptor (317 aa).

Over 1-37 (MPVLGSQRRLLGSLNCTPPATFPLTLAPNRTGPQCLE) the chain is Extracellular. N-linked (GlcNAc...) asparagine glycosylation occurs at N29. Residues 38–63 (VSIPDGLFLSLGLVSLVENVLVVAAI) traverse the membrane as a helical segment. The Cytoplasmic portion of the chain corresponds to 64–72 (AKNRNLHSP). Residues 73 to 93 (MYYFICCLAMSDLLVSVSNVL) traverse the membrane as a helical segment. At 94-118 (ETAVMLLLEAGALAAQAAVVQQLDN) the chain is on the extracellular side. Residues 119-140 (VIDVLICGSMVSSLCFLGAIAV) form a helical membrane-spanning segment. Residues 141–163 (DRYISIFYALRYHSVVTLPRAWR) lie on the Cytoplasmic side of the membrane. The helical transmembrane segment at 164–183 (IIAAIWVASILTSLLFITYY) threads the bilayer. Topologically, residues 184–191 (NHTVVLLC) are extracellular. A helical transmembrane segment spans residues 192–211 (LVGFFIAMLALMAVLYVHML). At 212–240 (ARACQHARGIARLQKRQRPIHQGFGLKGA) the chain is on the cytoplasmic side. A helical transmembrane segment spans residues 241 to 266 (ATLTILLGVFFLCWGPFFLHLSLIVL). Residues 267–279 (CPQHPTCGCIFKN) are Extracellular-facing. The helical transmembrane segment at 280-300 (FNLFLALIICNAIVDPLIYAF) threads the bilayer. Topologically, residues 301-317 (RSQELRKTLQEVLQCSW) are cytoplasmic. C315 is lipidated: S-palmitoyl cysteine.

This sequence belongs to the G-protein coupled receptor 1 family. In terms of assembly, interacts with MGRN1, but does not undergo MGRN1-mediated ubiquitination; this interaction competes with GNAS-binding and thus inhibits agonist-induced cAMP production. Interacts with OPN3; the interaction results in a decrease in MC1R-mediated cAMP signaling and ultimately a decrease in melanin production in melanocytes.

It localises to the cell membrane. Receptor for MSH (alpha, beta and gamma) and ACTH. The activity of this receptor is mediated by G proteins which activate adenylate cyclase. Mediates melanogenesis, the production of eumelanin (black/brown) and phaeomelanin (red/yellow), via regulation of cAMP signaling in melanocytes. This chain is Melanocyte-stimulating hormone receptor (MC1R), found in Dama dama (Fallow deer).